A 159-amino-acid polypeptide reads, in one-letter code: Thioredoxin O2, mitochondrial (159 aa).

At S40 the chain carries Phosphoserine. Residues 43-159 enclose the Thioredoxin domain; that stretch reads FAEGDRSSFV…LKSVMEQLYK (117 aa). Catalysis depends on nucleophile residues C83 and C86. A disulfide bond links C83 and C86.

Belongs to the thioredoxin family. Plant O-type subfamily.

The protein resides in the mitochondrion. Thiol-disulfide oxidoreductase that may participate in various redox reactions. Possesses insulin disulfide bonds reducing activity. Reduced by thioredoxin reductases NTRA and NTRB. This is Thioredoxin O2, mitochondrial from Arabidopsis thaliana (Mouse-ear cress).